A 207-amino-acid polypeptide reads, in one-letter code: Ribosomal RNA small subunit methyltransferase G (207 aa).

Residues glycine 76, glutamine 81, 127-128 (VE), and arginine 141 each bind S-adenosyl-L-methionine.

This sequence belongs to the methyltransferase superfamily. RNA methyltransferase RsmG family.

It localises to the cytoplasm. It carries out the reaction guanosine(527) in 16S rRNA + S-adenosyl-L-methionine = N(7)-methylguanosine(527) in 16S rRNA + S-adenosyl-L-homocysteine. Functionally, specifically methylates the N7 position of guanine in position 527 of 16S rRNA. The protein is Ribosomal RNA small subunit methyltransferase G of Neisseria gonorrhoeae (strain ATCC 700825 / FA 1090).